The following is a 318-amino-acid chain: NADH-ubiquinone oxidoreductase chain 1 (318 aa).

8 helical membrane-spanning segments follow: residues 2-22, 70-90, 100-120, 136-156, 172-192, 222-242, 253-273, and 294-314; these read FMIN…FLTL, MFII…SPLP, LGVL…LWSG, VAQT…VLLM, LWLL…TLAE, LFFL…AILF, ELYT…FLWI, and LPLT…TASI.

Belongs to the complex I subunit 1 family. As to quaternary structure, core subunit of respiratory chain NADH dehydrogenase (Complex I) which is composed of 45 different subunits.

Its subcellular location is the mitochondrion inner membrane. The enzyme catalyses a ubiquinone + NADH + 5 H(+)(in) = a ubiquinol + NAD(+) + 4 H(+)(out). Core subunit of the mitochondrial membrane respiratory chain NADH dehydrogenase (Complex I) which catalyzes electron transfer from NADH through the respiratory chain, using ubiquinone as an electron acceptor. Essential for the catalytic activity and assembly of complex I. This Balaenoptera musculus (Blue whale) protein is NADH-ubiquinone oxidoreductase chain 1 (MT-ND1).